Here is a 193-residue protein sequence, read N- to C-terminus: 3-isopropylmalate dehydratase small subunit (193 aa).

It belongs to the LeuD family. LeuD type 1 subfamily. In terms of assembly, heterodimer of LeuC and LeuD.

It carries out the reaction (2R,3S)-3-isopropylmalate = (2S)-2-isopropylmalate. The protein operates within amino-acid biosynthesis; L-leucine biosynthesis; L-leucine from 3-methyl-2-oxobutanoate: step 2/4. Functionally, catalyzes the isomerization between 2-isopropylmalate and 3-isopropylmalate, via the formation of 2-isopropylmaleate. The chain is 3-isopropylmalate dehydratase small subunit from Listeria innocua serovar 6a (strain ATCC BAA-680 / CLIP 11262).